The primary structure comprises 420 residues: CinA-like protein (420 aa).

It belongs to the CinA family.

This Chlorobium phaeobacteroides (strain BS1) protein is CinA-like protein.